Reading from the N-terminus, the 829-residue chain is Cadherin-16 (829 aa).

The first 18 residues, 1-18, serve as a signal peptide directing secretion; it reads MVPAWLWLLCFSVPQALV. Residues 19–786 are Extracellular-facing; the sequence is EVSPTTLHVE…MKGMPTKLSA (768 aa). 6 consecutive Cadherin domains span residues 25–126, 131–235, 242–336, 341–449, 455–564, and 569–665; these read LHVE…VPQF, YSAR…SIVE, EPVH…APVC, PPVS…APEF, GPVS…PPRL, and YEAD…APAL. Asn517, Asn602, and Asn722 each carry an N-linked (GlcNAc...) asparagine glycan. The tract at residues 666–786 is ectodomain G; that stretch reads PLAPMPSRHL…MKGMPTKLSA (121 aa). A helical transmembrane segment spans residues 787–807; the sequence is VGILVGTLAAIGFFLILIFTH. The Cytoplasmic portion of the chain corresponds to 808–829; the sequence is LALARKKDLDAPADNVPLKAAA.

Kidney specific. Limited to the basolateral membranes of renal tubular epithelial cells.

It localises to the cell membrane. Cadherins are calcium-dependent cell adhesion proteins. They preferentially interact with themselves in a homophilic manner in connecting cells; cadherins may thus contribute to the sorting of heterogeneous cell types. This chain is Cadherin-16 (CDH16), found in Oryctolagus cuniculus (Rabbit).